A 513-amino-acid polypeptide reads, in one-letter code: Microcin J25-processing protein McjC (513 aa).

Positions 176 to 436 constitute an Asparagine synthetase domain; it reads STIDSIIDNI…FGSDIFWKKT (261 aa).

It is found in the cytoplasm. In terms of biological role, along with McjB, necessary and sufficient to process the inactive microcin J25 (McjA) precursor into the active peptide. May be involved in the formation of the amide bond between Gly-38 and Glu-53 of McjA. In Escherichia coli, this protein is Microcin J25-processing protein McjC (mcjC).